The following is a 199-amino-acid chain: MINITIIDTGCANLSSVKFAFDRLGYNTEITFDLNKIKSADKLILPGVGTANAAMYNLQERQLIETIQNLTQPVLGICLGMQLMTEFSEEGNVPTLNLISGKTNRIPDTGLPLPQMGWNRVQFVKNCPLFDGIVQNSHFYFVHSYAVSPNEHSVAISNYGVNFSAAIAKENFYGVQFHPERSGKNGALLLKNFVEKVPF.

The Glutamine amidotransferase type-1 domain maps to 3–199 (NITIIDTGCA…LKNFVEKVPF (197 aa)). Catalysis depends on Cys-78, which acts as the Nucleophile. Active-site residues include His-178 and Glu-180.

In terms of assembly, heterodimer of HisH and HisF.

The protein resides in the cytoplasm. It catalyses the reaction 5-[(5-phospho-1-deoxy-D-ribulos-1-ylimino)methylamino]-1-(5-phospho-beta-D-ribosyl)imidazole-4-carboxamide + L-glutamine = D-erythro-1-(imidazol-4-yl)glycerol 3-phosphate + 5-amino-1-(5-phospho-beta-D-ribosyl)imidazole-4-carboxamide + L-glutamate + H(+). The catalysed reaction is L-glutamine + H2O = L-glutamate + NH4(+). It functions in the pathway amino-acid biosynthesis; L-histidine biosynthesis; L-histidine from 5-phospho-alpha-D-ribose 1-diphosphate: step 5/9. IGPS catalyzes the conversion of PRFAR and glutamine to IGP, AICAR and glutamate. The HisH subunit catalyzes the hydrolysis of glutamine to glutamate and ammonia as part of the synthesis of IGP and AICAR. The resulting ammonia molecule is channeled to the active site of HisF. The polypeptide is Imidazole glycerol phosphate synthase subunit HisH (hisH) (Haemophilus influenzae (strain ATCC 51907 / DSM 11121 / KW20 / Rd)).